Reading from the N-terminus, the 462-residue chain is Argininosuccinate lyase (462 aa).

Belongs to the lyase 1 family. Argininosuccinate lyase subfamily.

Its subcellular location is the cytoplasm. The enzyme catalyses 2-(N(omega)-L-arginino)succinate = fumarate + L-arginine. Its pathway is amino-acid biosynthesis; L-arginine biosynthesis; L-arginine from L-ornithine and carbamoyl phosphate: step 3/3. The sequence is that of Argininosuccinate lyase from Bacillus cytotoxicus (strain DSM 22905 / CIP 110041 / 391-98 / NVH 391-98).